Here is a 266-residue protein sequence, read N- to C-terminus: DLA class II histocompatibility antigen, DR-1 beta chain (266 aa).

The signal sequence occupies residues 1-29 (MVCLCFLGGSWMTALMLILMVLNPPFAWA). The tract at residues 30–124 (RDTPPHFLEV…IESFTVQRRV (95 aa)) is beta-1. Topologically, residues 30-227 (RDTPPHFLEV…RAQSDSAQSK (198 aa)) are extracellular. Intrachain disulfides connect Cys44-Cys108 and Cys146-Cys202. An N-linked (GlcNAc...) asparagine glycan is attached at Asn48. Residues 125–227 (EPTVTVYPTK…RAQSDSAQSK (103 aa)) are beta-2. Residues 126–214 (PTVTVYPTKT…EHPSLTSPVT (89 aa)) enclose the Ig-like C1-type domain. The helical transmembrane segment at 228-250 (MLSGIGGFVLGLLFLAVGLFIYF) threads the bilayer. Residues 251-266 (RNQKGHSGLQPTGLLS) are Cytoplasmic-facing.

This sequence belongs to the MHC class II family.

Its subcellular location is the membrane. The protein is DLA class II histocompatibility antigen, DR-1 beta chain of Canis lupus familiaris (Dog).